A 326-amino-acid polypeptide reads, in one-letter code: ELAV-like protein 1-B (326 aa).

RRM domains are found at residues 20–98, 106–186, and 244–322; these read TNLI…FARP, ANLY…FAAN, and WCIF…FKTS.

Belongs to the RRM elav family. In terms of assembly, interacts (via RRM3) with cirbp. Unable to form oligomers. Part of a ribonucleoprotein (RNP) complex, at least composed of elavl1/elrA and/or elavl2/elrB, igf2bp3/vg1RBP, ddx6/Xp54, ybx2/frgy2, lsm14b/rap55b and, in a subset of RNP complexes, stau1/staufen.

Its subcellular location is the cytoplasm. It is found in the cell cortex. In terms of biological role, RNA-binding protein that binds to the 3'-UTR region of mRNAs and increases their stability. Involved in embryonic stem cells (ESCs) differentiation: preferentially binds mRNAs that are not methylated by N6-methyladenosine (m6A), stabilizing them, promoting ESCs differentiation. Binds to poly-U elements and AU-rich elements (AREs) in the 3'-UTR of target mRNAs. Acts cooperatively with cribp to stabilize AU-rich sequence (ARE)-containing mRNAs. May play a role during gastrulation. Required for the vegetal localization of vg1 mRNA. In Xenopus laevis (African clawed frog), this protein is ELAV-like protein 1-B (elavl1-b).